A 56-amino-acid chain; its full sequence is MALGPWQIFLILVIILVLFGAGKLPDVMSDLGKGIRNLKQELKDNKLASTEDESNL.

Residues 1 to 21 (MALGPWQIFLILVIILVLFGA) traverse the membrane as a helical segment.

It belongs to the TatA/E family. The Tat system comprises two distinct complexes: a TatABC complex, containing multiple copies of TatA, TatB and TatC subunits, and a separate TatA complex, containing only TatA subunits. Substrates initially bind to the TatABC complex, which probably triggers association of the separate TatA complex to form the active translocon.

The protein resides in the cell inner membrane. In terms of biological role, part of the twin-arginine translocation (Tat) system that transports large folded proteins containing a characteristic twin-arginine motif in their signal peptide across membranes. TatA could form the protein-conducting channel of the Tat system. In Ehrlichia ruminantium (strain Welgevonden), this protein is Sec-independent protein translocase protein TatA.